The primary structure comprises 420 residues: Phytoene synthase 1, chloroplastic (420 aa).

The transit peptide at 1-70 (MAAITLLRSA…GEIARTSPVY (70 aa)) directs the protein to the chloroplast.

Belongs to the phytoene/squalene synthase family. As to expression, expressed in leaves. Highly expressed in developing leaves. Expressed at low levels in roots.

It is found in the plastid. Its subcellular location is the chloroplast membrane. The protein localises to the chloroplast. It localises to the plastoglobule. It carries out the reaction 2 (2E,6E,10E)-geranylgeranyl diphosphate = 15-cis-phytoene + 2 diphosphate. Its function is as follows. Catalyzes the conversion of geranylgeranyl diphosphate to phytoene. Mediates the first committed step in carotenoid biosynthesis. The polypeptide is Phytoene synthase 1, chloroplastic (Oryza sativa subsp. japonica (Rice)).